Reading from the N-terminus, the 265-residue chain is Mlc titration factor A (265 aa).

Zn(2+) contacts are provided by H111, H148, H152, and E211.

This sequence belongs to the MtfA family. In terms of assembly, interacts with Mlc. It depends on Zn(2+) as a cofactor.

The protein resides in the cytoplasm. Its function is as follows. Involved in the modulation of the activity of the glucose-phosphotransferase system (glucose-PTS). Interacts with the transcriptional repressor Mlc, preventing its interaction with DNA and leading to the modulation of expression of genes regulated by Mlc, including ptsG, which encodes the PTS system glucose-specific EIICB component. Shows zinc-dependent metallopeptidase activity. The protein is Mlc titration factor A of Salmonella agona (strain SL483).